The primary structure comprises 104 residues: Protein RnfH (104 aa).

The protein belongs to the UPF0125 (RnfH) family.

The protein is Protein RnfH of Pseudomonas fluorescens (strain ATCC BAA-477 / NRRL B-23932 / Pf-5).